The sequence spans 975 residues: Lateral signaling target protein 2 homolog (975 aa).

Disordered regions lie at residues 299–458 and 504–523; these read PLGS…GTDE and YGTA…PSTS. 4 stretches are compositionally biased toward low complexity: residues 302-352, 365-376, 383-400, and 408-429; these read SSSI…TTNT, NNHNSNSNSSSN, TLRS…TPTA, and PSHS…PADW. A compositionally biased stretch (acidic residues) spans 430 to 458; that stretch reads SDGDDEDEDDDDIDVDEEDPESSDDGTDE. Phosphoserine is present on residues S540 and S541. 2 disordered regions span residues 556-633 and 740-891; these read EEHM…SSLS and DNVF…SPPA. Positions 564-602 are enriched in basic residues; that stretch reads GRHHRHHQSHHHHHHHRHSHQHQHRQPHPHRTTRSGRKR. The span at 621-633 shows a compositional bias: low complexity; that stretch reads LASGDTSAASSLS. Over residues 751–770 the composition is skewed to polar residues; sequence ATGQRHSAGASMQRNNTIDL. A Phosphoserine modification is found at S796. Composition is skewed to low complexity over residues 802–860 and 877–890; these read AASS…PVSA and PSSA…LSPP. The segment at 895–955 adopts an FYVE-type zinc-finger fold; sequence DGKAPRCMAC…VCRDCYVREV (61 aa). Zn(2+) is bound by residues C901, C904, C917, C920, C925, C928, C947, and C950.

The protein belongs to the lst-2 family.

Negative regulator of epidermal growth factor receptor (EGFR) signaling. This Drosophila sechellia (Fruit fly) protein is Lateral signaling target protein 2 homolog.